Here is a 467-residue protein sequence, read N- to C-terminus: Glutamate--tRNA ligase (467 aa).

The short motif at 9-19 (PSPTGYLHIGG) is the 'HIGH' region element. Positions 237–241 (KLSKR) match the 'KMSKS' region motif. ATP is bound at residue Lys-240.

It belongs to the class-I aminoacyl-tRNA synthetase family. Glutamate--tRNA ligase type 1 subfamily. Monomer.

The protein resides in the cytoplasm. It catalyses the reaction tRNA(Glu) + L-glutamate + ATP = L-glutamyl-tRNA(Glu) + AMP + diphosphate. Its function is as follows. Catalyzes the attachment of glutamate to tRNA(Glu) in a two-step reaction: glutamate is first activated by ATP to form Glu-AMP and then transferred to the acceptor end of tRNA(Glu). The sequence is that of Glutamate--tRNA ligase from Xanthomonas axonopodis pv. citri (strain 306).